The primary structure comprises 309 residues: tRNA pseudouridine synthase B (309 aa).

The Nucleophile role is filled by aspartate 51.

Belongs to the pseudouridine synthase TruB family. Type 1 subfamily.

It carries out the reaction uridine(55) in tRNA = pseudouridine(55) in tRNA. Responsible for synthesis of pseudouridine from uracil-55 in the psi GC loop of transfer RNAs. In Coxiella burnetii (strain RSA 331 / Henzerling II), this protein is tRNA pseudouridine synthase B.